Reading from the N-terminus, the 322-residue chain is MRRLPPVLLEDGCPRELISLIRTILAACKEISFRVGQGELSGVLGSTLDENIQGETQKKLDVLTNQLLKDILLESGYVKAIASEEEDYTVAGNPDAEYIVAFDPLDGSSNTDINSLVGTIFSVMKAPEGADPADQSIFMQPGINQVAAGYVLYGPSTILALTTGKGTRFFTLDKTHGTFLLTQDFAKIPADTNEYAINASNQRHWQPAMQNYINDLVAGDTGPRARNFNMRWIAAMVGDVHRVLSRGGLFTYPTDTKNPSQPNKLRLLYEANPMAMLVEQAGGIASTGTERIMDIQPNAIHQRVAVILGSKNEVETCLGYHK.

Mg(2+) contacts are provided by Glu-84, Asp-103, Leu-105, and Asp-106. Residues 106-109, Asn-198, and Lys-264 contribute to the substrate site; that span reads DGSS. Glu-270 contacts Mg(2+).

The protein belongs to the FBPase class 1 family. As to quaternary structure, homotetramer. Requires Mg(2+) as cofactor.

It is found in the cytoplasm. It catalyses the reaction beta-D-fructose 1,6-bisphosphate + H2O = beta-D-fructose 6-phosphate + phosphate. Its pathway is carbohydrate biosynthesis; gluconeogenesis. This Pseudoalteromonas translucida (strain TAC 125) protein is Fructose-1,6-bisphosphatase class 1 1.